The sequence spans 86 residues: Large ribosomal subunit protein bL27 (86 aa).

The protein belongs to the bacterial ribosomal protein bL27 family.

The polypeptide is Large ribosomal subunit protein bL27 (Flavobacterium johnsoniae (strain ATCC 17061 / DSM 2064 / JCM 8514 / BCRC 14874 / CCUG 350202 / NBRC 14942 / NCIMB 11054 / UW101) (Cytophaga johnsonae)).